The chain runs to 220 residues: Protein ABA DEFICIENT 4, chloroplastic (220 aa).

A chloroplast-targeting transit peptide spans 1–37; the sequence is MGFSSFISQPLSSSLSVMKRNVSAKRSELCLDSSKIR. A run of 4 helical transmembrane segments spans residues 77–97, 112–132, 154–174, and 195–215; these read IASS…TLMV, SVPY…SWTP, MFSS…VDLF, and SLCL…KAII.

Expressed in root vasculature, root hairs, leaves, trichomes, sepals, stamens, stigma, pedicels, siliques and embryo.

The protein resides in the plastid. The protein localises to the chloroplast membrane. Required for neoxanthin biosynthesis, an intermediary step in abscisic acid (ABA) biosynthesis. Probably not involved directly in the enzymatic conversion of violaxanthin to neoxanthin. Cannot convert violaxanthin to neoxanthin in vitro. Required for ABA biosynthesis in response to drought stress. Required for neoxanthin biosynthesis which is involved in photoprotection of photosystem II (PSII). Neoxanthin acts as an antioxidant within the photosystem PSII supercomplex. The polypeptide is Protein ABA DEFICIENT 4, chloroplastic (Arabidopsis thaliana (Mouse-ear cress)).